The sequence spans 100 residues: Integration host factor subunit alpha (100 aa).

The protein belongs to the bacterial histone-like protein family. In terms of assembly, heterodimer of an alpha and a beta chain.

Functionally, this protein is one of the two subunits of integration host factor, a specific DNA-binding protein that functions in genetic recombination as well as in transcriptional and translational control. In Ruegeria sp. (strain TM1040) (Silicibacter sp.), this protein is Integration host factor subunit alpha.